Consider the following 546-residue polypeptide: Histidine--tRNA ligase, mitochondrial (546 aa).

Residues 1-20 constitute a mitochondrion transit peptide; that stretch reads MLSRSLNKVVTSIKSSSIIR. L-histidine contacts are provided by residues 129–131, arginine 156, glutamine 172, aspartate 176, arginine 326, and 330–331; these read DLT and YY.

It belongs to the class-II aminoacyl-tRNA synthetase family.

It is found in the cytoplasm. It localises to the mitochondrion. The catalysed reaction is tRNA(His) + L-histidine + ATP = L-histidyl-tRNA(His) + AMP + diphosphate + H(+). Functionally, catalyzes the aminoacylation of histidyl-tRNA in both the cytoplasm and the mitochondrion. This is Histidine--tRNA ligase, mitochondrial (HTS1) from Saccharomyces cerevisiae (strain ATCC 204508 / S288c) (Baker's yeast).